Here is a 120-residue protein sequence, read N- to C-terminus: MKVSVAALSCLMLVTALGSQARVTKDAETEFMMSKLPLENPVLLDRFHATSADCCISYTPRSIPCSLLESYFETNSECSKPGVIFLTKKGRRFCANPSDKQVQVCMRMLKLDTRIKTRKN.

The signal sequence occupies residues 1-21 (MKVSVAALSCLMLVTALGSQA). 3 disulfide bridges follow: Cys54–Cys78, Cys55–Cys94, and Cys65–Cys105.

The protein belongs to the intercrine beta (chemokine CC) family. Post-translationally, the N-terminal is proteolytically cleaved by proteases associated with inflammatory responses. The processed forms, CCL23(19-99), CCL23(22-99), CCL23(27-99) and CCL23(30-99) exhibit increase in CCR1-mediated signaling and chemotaxis assays in vitro. As to expression, high levels in adult lung, liver, skeletal muscle and pancreas. Moderate levels in fetal liver, adult bone marrow and placenta. The short form is the major species and the longer form was detected only in very low abundance. CCL23(19-99), CCL23(22-99), CCL23(27-99), CCL23(30-99) are found in high levels in synovial fluids from rheumatoid patients.

The protein resides in the secreted. Functionally, shows chemotactic activity for monocytes, resting T-lymphocytes, and neutrophils, but not for activated lymphocytes. Inhibits proliferation of myeloid progenitor cells in colony formation assays. This protein can bind heparin. Binds CCR1. CCL23(19-99), CCL23(22-99), CCL23(27-99), CCL23(30-99) are more potent chemoattractants than CCL23. The sequence is that of C-C motif chemokine 23 (CCL23) from Homo sapiens (Human).